The sequence spans 104 residues: Large ribosomal subunit protein eL36 (104 aa).

Belongs to the eukaryotic ribosomal protein eL36 family.

The chain is Large ribosomal subunit protein eL36 (RPL36) from Tetrahymena thermophila (strain SB210).